Here is a 278-residue protein sequence, read N- to C-terminus: 4-hydroxy-tetrahydrodipicolinate reductase (278 aa).

Residues 13-18 and 111-113 contribute to the NAD(+) site; these read GAAGKM and GTT. Residue histidine 167 is the Proton donor/acceptor of the active site. Residue histidine 168 participates in (S)-2,3,4,5-tetrahydrodipicolinate binding. The active-site Proton donor is the lysine 171. 177 to 178 is a binding site for (S)-2,3,4,5-tetrahydrodipicolinate; it reads GT.

This sequence belongs to the DapB family.

The protein localises to the cytoplasm. It carries out the reaction (S)-2,3,4,5-tetrahydrodipicolinate + NAD(+) + H2O = (2S,4S)-4-hydroxy-2,3,4,5-tetrahydrodipicolinate + NADH + H(+). The catalysed reaction is (S)-2,3,4,5-tetrahydrodipicolinate + NADP(+) + H2O = (2S,4S)-4-hydroxy-2,3,4,5-tetrahydrodipicolinate + NADPH + H(+). It functions in the pathway amino-acid biosynthesis; L-lysine biosynthesis via DAP pathway; (S)-tetrahydrodipicolinate from L-aspartate: step 4/4. Catalyzes the conversion of 4-hydroxy-tetrahydrodipicolinate (HTPA) to tetrahydrodipicolinate. This chain is 4-hydroxy-tetrahydrodipicolinate reductase, found in Nostoc sp. (strain PCC 7120 / SAG 25.82 / UTEX 2576).